A 347-amino-acid polypeptide reads, in one-letter code: GMP reductase (347 aa).

108-131 (ADFEKTKQILDLNSALNFVCIDVA) is an NADP(+) binding site. Gly-181 and Gly-183 together coordinate K(+). The active-site Thioimidate intermediate is the Cys-186. An NADP(+)-binding site is contributed by 216–239 (IVSDGGCTTPGDVAKAFGGGADFV).

It belongs to the IMPDH/GMPR family. GuaC type 1 subfamily. In terms of assembly, homotetramer.

It carries out the reaction IMP + NH4(+) + NADP(+) = GMP + NADPH + 2 H(+). Functionally, catalyzes the irreversible NADPH-dependent deamination of GMP to IMP. It functions in the conversion of nucleobase, nucleoside and nucleotide derivatives of G to A nucleotides, and in maintaining the intracellular balance of A and G nucleotides. In Escherichia coli O81 (strain ED1a), this protein is GMP reductase.